A 184-amino-acid chain; its full sequence is Putative manganese efflux pump MntP (184 aa).

6 helical membrane-spanning segments follow: residues 12 to 32 (SIMA…MGMI), 39 to 59 (IIYI…FGML), 63 to 83 (LLSG…LLVL), 99 to 119 (FIAP…LDSF), 132 to 152 (VWMT…LGLL), and 164 to 184 (YSGA…LFPL).

Belongs to the MntP (TC 9.B.29) family.

Its subcellular location is the cell membrane. Its function is as follows. Probably functions as a manganese efflux pump. This is Putative manganese efflux pump MntP from Bacillus pumilus (strain SAFR-032).